Reading from the N-terminus, the 85-residue chain is Kunitz-type serine protease inhibitor homolog beta-bungarotoxin B1 chain, major component (85 aa).

The N-terminal stretch at 1–24 is a signal peptide; the sequence is MSSGGLLLLLGLLTLCAELIPVSS. The region spanning 31-81 is the BPTI/Kunitz inhibitor domain; that stretch reads CDKPPDKGNCGPVRRAFYYDTRLKTCKAFQYRGCNGNGNHFKTETLCRCEC. 3 disulfides stabilise this stretch: C31/C81, C40/C64, and C56/C77.

The protein belongs to the venom Kunitz-type family. In terms of assembly, heterodimer; disulfide-linked. The A chains have phospholipase A2 activity and the B chains show homology with the basic protease inhibitors. In terms of tissue distribution, expressed by the venom gland.

Its subcellular location is the secreted. In terms of biological role, beta-1-bungarotoxin is a presynaptic neurotoxin of the venom. The B chain is homologous to venom basic protease inhibitors but has no protease inhibitor activity and blocks voltage-gated potassium channels (Kv). The sequence is that of Kunitz-type serine protease inhibitor homolog beta-bungarotoxin B1 chain, major component from Bungarus multicinctus (Many-banded krait).